A 632-amino-acid polypeptide reads, in one-letter code: Bifunctional protein GlmU (632 aa).

Positions 1–229 (MAERELSVAI…PQEIVGVNDR (229 aa)) are pyrophosphorylase. UDP-N-acetyl-alpha-D-glucosamine-binding positions include 11-14 (LAAG), K25, Q76, and 81-82 (GT). D106 is a Mg(2+) binding site. G143, E158, N173, and N227 together coordinate UDP-N-acetyl-alpha-D-glucosamine. Position 227 (N227) interacts with Mg(2+). The linker stretch occupies residues 230 to 250 (RQLAQAYQILQDRLKEAWMEA). The segment at 251 to 632 (GVTFVDPDSS…ADNSRPKSLQ (382 aa)) is N-acetyltransferase. UDP-N-acetyl-alpha-D-glucosamine is bound by residues R332 and K350. The active-site Proton acceptor is H362. Y365 and N376 together coordinate UDP-N-acetyl-alpha-D-glucosamine. Acetyl-CoA contacts are provided by residues A379, 385–386 (NY), A422, and R441. The disordered stretch occupies residues 600–632 (VAGDPCWPSPPPQPQQNQQTKPEADNSRPKSLQ). The span at 621 to 632 (PEADNSRPKSLQ) shows a compositional bias: basic and acidic residues.

It in the N-terminal section; belongs to the N-acetylglucosamine-1-phosphate uridyltransferase family. This sequence in the C-terminal section; belongs to the transferase hexapeptide repeat family. Homotrimer. Mg(2+) serves as cofactor.

The protein localises to the cytoplasm. It catalyses the reaction alpha-D-glucosamine 1-phosphate + acetyl-CoA = N-acetyl-alpha-D-glucosamine 1-phosphate + CoA + H(+). The catalysed reaction is N-acetyl-alpha-D-glucosamine 1-phosphate + UTP + H(+) = UDP-N-acetyl-alpha-D-glucosamine + diphosphate. It functions in the pathway nucleotide-sugar biosynthesis; UDP-N-acetyl-alpha-D-glucosamine biosynthesis; N-acetyl-alpha-D-glucosamine 1-phosphate from alpha-D-glucosamine 6-phosphate (route II): step 2/2. It participates in nucleotide-sugar biosynthesis; UDP-N-acetyl-alpha-D-glucosamine biosynthesis; UDP-N-acetyl-alpha-D-glucosamine from N-acetyl-alpha-D-glucosamine 1-phosphate: step 1/1. Its pathway is bacterial outer membrane biogenesis; LPS lipid A biosynthesis. Catalyzes the last two sequential reactions in the de novo biosynthetic pathway for UDP-N-acetylglucosamine (UDP-GlcNAc). The C-terminal domain catalyzes the transfer of acetyl group from acetyl coenzyme A to glucosamine-1-phosphate (GlcN-1-P) to produce N-acetylglucosamine-1-phosphate (GlcNAc-1-P), which is converted into UDP-GlcNAc by the transfer of uridine 5-monophosphate (from uridine 5-triphosphate), a reaction catalyzed by the N-terminal domain. The protein is Bifunctional protein GlmU of Synechococcus sp. (strain JA-2-3B'a(2-13)) (Cyanobacteria bacterium Yellowstone B-Prime).